The following is a 532-amino-acid chain: Phosphoenolpyruvate carboxykinase (ATP) (532 aa).

The substrate site is built by R60, Y195, and K201. ATP is bound by residues K201, H221, and 237-245 (GLSGTGKTT). Positions 201 and 221 each coordinate Mn(2+). D258 contributes to the Mn(2+) binding site. Positions 287, 323, and 448 each coordinate ATP. R323 contributes to the substrate binding site.

The protein belongs to the phosphoenolpyruvate carboxykinase (ATP) family. It depends on Mn(2+) as a cofactor.

It is found in the cytoplasm. The enzyme catalyses oxaloacetate + ATP = phosphoenolpyruvate + ADP + CO2. It functions in the pathway carbohydrate biosynthesis; gluconeogenesis. Its function is as follows. Involved in the gluconeogenesis. Catalyzes the conversion of oxaloacetate (OAA) to phosphoenolpyruvate (PEP) through direct phosphoryl transfer between the nucleoside triphosphate and OAA. The polypeptide is Phosphoenolpyruvate carboxykinase (ATP) (Christiangramia forsetii (strain DSM 17595 / CGMCC 1.15422 / KT0803) (Gramella forsetii)).